We begin with the raw amino-acid sequence, 230 residues long: Heptaprenylglyceryl phosphate synthase (230 aa).

Position 12 (Lys-12) interacts with sn-glycerol 1-phosphate. Mg(2+) is bound by residues Asp-14 and Thr-40. Residues 159–164, Gly-189, and 209–210 each bind sn-glycerol 1-phosphate; these read YIEYSG and GD.

It belongs to the GGGP/HepGP synthase family. Group I subfamily. As to quaternary structure, homodimer. Mg(2+) is required as a cofactor.

It catalyses the reaction sn-glycerol 1-phosphate + all-trans-heptaprenyl diphosphate = 3-heptaprenyl-sn-glycero-1-phosphate + diphosphate. Its pathway is membrane lipid metabolism; glycerophospholipid metabolism. In terms of biological role, prenyltransferase that catalyzes in vivo the transfer of the heptaprenyl moiety of heptaprenyl pyrophosphate (HepPP; 35 carbon atoms) to the C3 hydroxyl of sn-glycerol-1-phosphate (G1P), producing heptaprenylglyceryl phosphate (HepGP). This reaction is an ether-bond-formation step in the biosynthesis of archaea-type G1P-based membrane lipids found in Bacillales. The sequence is that of Heptaprenylglyceryl phosphate synthase from Staphylococcus aureus (strain bovine RF122 / ET3-1).